Reading from the N-terminus, the 596-residue chain is Elongation factor 4 (596 aa).

Residues 2 to 184 enclose the tr-type G domain; the sequence is KHIRNFSIIA…VIVEQIPPPE (183 aa). GTP-binding positions include 14–19 and 131–134; these read DHGKST and NKID.

It belongs to the TRAFAC class translation factor GTPase superfamily. Classic translation factor GTPase family. LepA subfamily.

It is found in the cell inner membrane. It catalyses the reaction GTP + H2O = GDP + phosphate + H(+). Its function is as follows. Required for accurate and efficient protein synthesis under certain stress conditions. May act as a fidelity factor of the translation reaction, by catalyzing a one-codon backward translocation of tRNAs on improperly translocated ribosomes. Back-translocation proceeds from a post-translocation (POST) complex to a pre-translocation (PRE) complex, thus giving elongation factor G a second chance to translocate the tRNAs correctly. Binds to ribosomes in a GTP-dependent manner. In Shewanella piezotolerans (strain WP3 / JCM 13877), this protein is Elongation factor 4.